We begin with the raw amino-acid sequence, 610 residues long: UvrABC system protein C (610 aa).

One can recognise a GIY-YIG domain in the interval 16-94 (SQPGVYRMYD…IKLYQPRYNV (79 aa)). The 36-residue stretch at 204–239 (DQVLTQLISRMETASQNLEFEEAARIRDQIQAVRRV) folds into the UVR domain.

This sequence belongs to the UvrC family. Interacts with UvrB in an incision complex.

Its subcellular location is the cytoplasm. Functionally, the UvrABC repair system catalyzes the recognition and processing of DNA lesions. UvrC both incises the 5' and 3' sides of the lesion. The N-terminal half is responsible for the 3' incision and the C-terminal half is responsible for the 5' incision. The chain is UvrABC system protein C from Escherichia coli (strain ATCC 8739 / DSM 1576 / NBRC 3972 / NCIMB 8545 / WDCM 00012 / Crooks).